The primary structure comprises 203 residues: Small ribosomal subunit protein uS7 (203 aa).

Residues 1–22 form a disordered region; the sequence is MSESEAPEPDQPAGAEEATGAK.

It belongs to the universal ribosomal protein uS7 family. Part of the 30S ribosomal subunit.

Functionally, one of the primary rRNA binding proteins, it binds directly to 16S rRNA where it nucleates assembly of the head domain of the 30S subunit. Is located at the subunit interface close to the decoding center. The sequence is that of Small ribosomal subunit protein uS7 from Halococcus morrhuae (Micrococcus morrhuae).